The following is a 634-amino-acid chain: MTNSNLRTENHFDYVKITLASPERVMEWGQRTLPNGQVVGEVTKPETINYRTLKPEMDGLFCEKIFGPSKDWECHCGKYKRVRHRGIVCERCGVEVTESRVRRHRMGFIKLAAPVSHVWYLKGIPSYVAILLDMPLRDVEQIVYFNCYVVLDPGDHKELKYKQLLTEDEWLEIEDEIYAEESEIENEPVVGIGAEALKQLLEDLNLEEVAEQLREEINGSKGQKRAKLIKRLRVIDNFVATSARPEWMVLDVIPVIPPDLRPMVQLDGGRFATSDLNDLYRRVINRNNRLARLQEILAPEIIVRNEKRMLQEAVDALIDNGRRGRTVVGANNRPLKSLSDIIEGKQGRFRQNLLGKRVDYSGRSVIVVGPKLKMHQCGLPKEMAIELFQPFVIHRLIRQNIVNNIKAAKKLIQRADDEVMQVLQEVIDGHPIMLNRAPTLHRLGIQAFEPKLVDGRAIQLHPLVCPAFNADFDGDQMAVHVPLAIEAQTEARMLMLASNNILSPATGEPIVTPSQDMVLGSYYLTALQPGAEQPEFGDRSRTYSSLEDVIHAFEDTRIGLHDWVWVRFNGEVEDNDELDEPIKSETLSDGTRIEQWTYRRDRFDEDGALISRYILTTTGRVVMNHTIIGAVAAA.

Zn(2+) is bound by residues Cys74, Cys76, Cys89, and Cys92. Mg(2+)-binding residues include Asp471, Asp473, and Asp475.

The protein belongs to the RNA polymerase beta' chain family. RpoC1 subfamily. In cyanobacteria the RNAP catalytic core is composed of 2 alpha, 1 beta, 1 beta', 1 gamma and 1 omega subunit. When a sigma factor is associated with the core the holoenzyme is formed, which can initiate transcription. Mg(2+) serves as cofactor. Zn(2+) is required as a cofactor.

The enzyme catalyses RNA(n) + a ribonucleoside 5'-triphosphate = RNA(n+1) + diphosphate. Functionally, DNA-dependent RNA polymerase catalyzes the transcription of DNA into RNA using the four ribonucleoside triphosphates as substrates. This is DNA-directed RNA polymerase subunit gamma from Parasynechococcus marenigrum (strain WH8102).